The chain runs to 262 residues: Cytochrome c oxidase subunit 3 (262 aa).

6 consecutive transmembrane segments (helical) span residues 39 to 59 (YTMT…YQWW), 83 to 103 (GMIL…WAFF), 120 to 140 (VGII…ILLA), 163 to 183 (GLFF…YEYI), 201 to 221 (ATGF…ICFL), and 240 to 260 (AWYW…IYWW).

The protein belongs to the cytochrome c oxidase subunit 3 family. In terms of assembly, component of the cytochrome c oxidase (complex IV, CIV), a multisubunit enzyme composed of a catalytic core of 3 subunits and several supernumerary subunits. The complex exists as a monomer or a dimer and forms supercomplexes (SCs) in the inner mitochondrial membrane with ubiquinol-cytochrome c oxidoreductase (cytochrome b-c1 complex, complex III, CIII).

Its subcellular location is the mitochondrion inner membrane. The catalysed reaction is 4 Fe(II)-[cytochrome c] + O2 + 8 H(+)(in) = 4 Fe(III)-[cytochrome c] + 2 H2O + 4 H(+)(out). Functionally, component of the cytochrome c oxidase, the last enzyme in the mitochondrial electron transport chain which drives oxidative phosphorylation. The respiratory chain contains 3 multisubunit complexes succinate dehydrogenase (complex II, CII), ubiquinol-cytochrome c oxidoreductase (cytochrome b-c1 complex, complex III, CIII) and cytochrome c oxidase (complex IV, CIV), that cooperate to transfer electrons derived from NADH and succinate to molecular oxygen, creating an electrochemical gradient over the inner membrane that drives transmembrane transport and the ATP synthase. Cytochrome c oxidase is the component of the respiratory chain that catalyzes the reduction of oxygen to water. Electrons originating from reduced cytochrome c in the intermembrane space (IMS) are transferred via the dinuclear copper A center (CU(A)) of subunit 2 and heme A of subunit 1 to the active site in subunit 1, a binuclear center (BNC) formed by heme A3 and copper B (CU(B)). The BNC reduces molecular oxygen to 2 water molecules using 4 electrons from cytochrome c in the IMS and 4 protons from the mitochondrial matrix. The sequence is that of Cytochrome c oxidase subunit 3 (COIII) from Anopheles quadrimaculatus (Common malaria mosquito).